A 260-amino-acid polypeptide reads, in one-letter code: Creatinine amidohydrolase (260 aa).

A Mn(2+)-binding site is contributed by Glu-34. Zn(2+)-binding residues include Glu-34, His-36, and Asp-45. Asp-45 serves as a coordination point for Mn(2+). Creatine is bound at residue Ser-78. His-120 lines the Mn(2+) pocket. His-120 serves as a coordination point for Zn(2+). Residues Tyr-121, Trp-174, Asp-175, and His-178 each contribute to the creatine site. Position 183 (Glu-183) interacts with Zn(2+).

Belongs to the creatininase superfamily. As to quaternary structure, homohexamer; trimer of dimers. Requires Zn(2+) as cofactor. Mn(2+) serves as cofactor.

The enzyme catalyses creatinine + H2O = creatine. The protein operates within amine and polyamine degradation; creatinine degradation. Is markedly inactivated in vitro by heavy metal ions, N-bromosuccinimide, ethoxyformic anhydride, and dye-sensitized photooxidation. Functionally, cyclic amidohydrolase that catalyzes the reversible conversion of creatinine to creatine. Is also active toward glycocyamidine, though the reaction rate is very low, but it is completely inert toward hydantoin and its derivatives. This is Creatinine amidohydrolase (crnA) from Pseudomonas putida (Arthrobacter siderocapsulatus).